The following is a 698-amino-acid chain: Zinc finger CCCH domain-containing protein 7 (698 aa).

Residues 1–11 are compositionally biased toward pro residues; the sequence is MEEPSPVPPAA. Disordered regions lie at residues 1–23, 56–95, 109–137, and 272–300; these read MEEP…PPTT, HAAR…GGDR, APHE…PQGT, and GSLD…SGNS. Low complexity-rich tracts occupy residues 12-21 and 65-74; these read APASLAAAPP and EPAAAAAIPP. Acidic residues predominate over residues 281–300; sequence EEGEIEGDTQNLDADDSGNS. C3H1-type zinc fingers lie at residues 429–456, 458–485, and 486–511; these read PKVV…HDTT, LTKS…HELS, and KYPC…HVIP. Disordered regions lie at residues 512 to 553 and 607 to 682; these read TAEG…GEPA and TEKH…QHEV. 2 stretches are compositionally biased toward polar residues: residues 535–548 and 665–680; these read CQEQ…STVY and SLPT…STQH.

This is Zinc finger CCCH domain-containing protein 7 from Oryza sativa subsp. japonica (Rice).